The sequence spans 363 residues: Homeobox protein DTH-2 (363 aa).

Residues 133–192 (RRKRRILFSQAQIYELERRFKQQKYLSAPEREHLANLINLTPTQVKIWFQNHRYKCKRSQ) constitute a DNA-binding region (homeobox). The interval 189 to 246 (KRSQKDKEKEQQKEKSYHLKKNIVDDKERSPNKQICNASSSDRSTPEEPVAKAKESGL) is disordered. The segment covering 191 to 219 (SQKDKEKEQQKEKSYHLKKNIVDDKERSP) has biased composition (basic and acidic residues). Polar residues predominate over residues 220–231 (NKQICNASSSDR). The span at 232–246 (STPEEPVAKAKESGL) shows a compositional bias: basic and acidic residues.

It belongs to the NK-2 homeobox family. As to expression, intestine and unidentified peripheral parenchymal cells. Slightly higher levels in the cephalic region compared to other body regions.

Its subcellular location is the nucleus. This protein might be involved in determination and/or differentiation of nerve cells in the continuous replacement of neurons in the cephalic region. The chain is Homeobox protein DTH-2 (DTH-2) from Girardia tigrina (Planarian).